The chain runs to 285 residues: RNA 5'-monophosphate methyltransferase (285 aa).

Positions 1-28 are disordered; it reads MAATQELSKGGVEEAVEEDDPAALKPGA. S-adenosyl-L-methionine is bound by residues Arg46, Asn77, Asp111, 136–137, and Met165; that span reads DI. The 223-residue stretch at 53-275 folds into the Bin3-type SAM domain; that stretch reads ELLRQLFPPE…KHTEETQAIP (223 aa).

This sequence belongs to the methyltransferase superfamily. As to quaternary structure, interacts with DICER1; the interaction may be mediated by RNA.

It localises to the cytoplasm. The catalysed reaction is a 5'-end 5'-phospho-ribonucleoside-RNA + S-adenosyl-L-methionine = a 5'-end (5'-methylphospho)-ribonucleoside-RNA + S-adenosyl-L-homocysteine. It catalyses the reaction a 5'-end 5'-phospho-ribonucleoside-RNA + 2 S-adenosyl-L-methionine = a 5'-end (5'-bismethylphospho)-ribonucleoside-RNA + 2 S-adenosyl-L-homocysteine. Its function is as follows. O-methyltransferase that specifically monomethylates 5'-monophosphate of cytoplasmic histidyl tRNA (tRNA(His)), acting as a capping enzyme by protecting tRNA(His) from cleavage by DICER1. Also able, with less efficiently, to methylate the 5' monophosphate of a subset of pre-miRNAs, acting as a negative regulator of miRNA processing. The 5' monophosphate of pre-miRNAs is recognized by DICER1 and is required for pre-miRNAs processing: methylation at this position reduces the processing of pre-miRNAs by DICER1. Was also reported to mediate dimethylation of pre-miR-145; however dimethylation cannot be reproduced by another group which observes a monomethylation of pre-miR-145. This chain is RNA 5'-monophosphate methyltransferase, found in Rattus norvegicus (Rat).